A 431-amino-acid chain; its full sequence is MSVIQDLQSRGLIAQTTDIEALDALLNEQKIALYCGFDPTADSLHIGHLLPVLALRRFQQAGHTPIALVGGATGMIGDPSFKAAERSLNSAETVAGWVGSIRSQLTPFLSFEGGNAAIMANNADWFGSMNCLDFLRDIGKHFSVNAMLNKESVKQRIDRDGAGISFTEFAYSLLQGYDFAELNKRHGAVLEIGGSDQWGNITAGIDLTRRLNQKQVFGLTLPLVTKSDGTKFGKTEGGAVWLNAKKTSPYQFYQFWLKVADADVYKFLKYFTFLSIEEIGVVEAKDKASGSKPEAQRILAEEMTRLIHGEEALAAAQRISESLFAEDQSRLTESDFEQLALDGLPAFEVSDGINAVEALVKTGLAASNKEARGFVNAKAVLLNGKPAEANNPNHAAERPDDAYLLIGEYKRFGKYTILRRGKRNHALLVWK.

Tyr34 is an L-tyrosine binding site. A 'HIGH' region motif is present at residues 39–48; sequence PTADSLHIGH. L-tyrosine contacts are provided by Tyr171 and Gln175. A 'KMSKS' region motif is present at residues 231–235; it reads KFGKT. ATP is bound at residue Lys234. Residues 353–422 enclose the S4 RNA-binding domain; the sequence is INAVEALVKT…GKYTILRRGK (70 aa).

The protein belongs to the class-I aminoacyl-tRNA synthetase family. TyrS type 1 subfamily. In terms of assembly, homodimer.

Its subcellular location is the cytoplasm. It carries out the reaction tRNA(Tyr) + L-tyrosine + ATP = L-tyrosyl-tRNA(Tyr) + AMP + diphosphate + H(+). Its function is as follows. Catalyzes the attachment of tyrosine to tRNA(Tyr) in a two-step reaction: tyrosine is first activated by ATP to form Tyr-AMP and then transferred to the acceptor end of tRNA(Tyr). The polypeptide is Tyrosine--tRNA ligase (Neisseria gonorrhoeae (strain ATCC 700825 / FA 1090)).